A 128-amino-acid polypeptide reads, in one-letter code: Large ribosomal subunit protein bL12 (128 aa).

It belongs to the bacterial ribosomal protein bL12 family. As to quaternary structure, homodimer. Part of the ribosomal stalk of the 50S ribosomal subunit. Forms a multimeric L10(L12)X complex, where L10 forms an elongated spine to which 2 to 4 L12 dimers bind in a sequential fashion. Binds GTP-bound translation factors.

Its function is as follows. Forms part of the ribosomal stalk which helps the ribosome interact with GTP-bound translation factors. Is thus essential for accurate translation. The polypeptide is Large ribosomal subunit protein bL12 (Saccharopolyspora erythraea (strain ATCC 11635 / DSM 40517 / JCM 4748 / NBRC 13426 / NCIMB 8594 / NRRL 2338)).